The sequence spans 99 residues: Integration host factor subunit alpha (99 aa).

Positions 52-73 (FGNFTLRDKPQRPGRNPKTGEE) are disordered.

This sequence belongs to the bacterial histone-like protein family. In terms of assembly, heterodimer of an alpha and a beta chain.

Its function is as follows. This protein is one of the two subunits of integration host factor, a specific DNA-binding protein that functions in genetic recombination as well as in transcriptional and translational control. The protein is Integration host factor subunit alpha of Legionella pneumophila subsp. pneumophila (strain Philadelphia 1 / ATCC 33152 / DSM 7513).